A 272-amino-acid polypeptide reads, in one-letter code: uncharacterized protein (272 aa).

The tract at residues 101 to 130 (CPTGKKNKAPSSLIPKISKTSTSSLTKEDE) is disordered. Positions 110-125 (PSSLIPKISKTSTSSL) are enriched in low complexity. Ser142 bears the Phosphoserine mark.

This is an uncharacterized protein from Arabidopsis thaliana (Mouse-ear cress).